A 233-amino-acid chain; its full sequence is EEF1A lysine methyltransferase 2 (233 aa).

This sequence belongs to the class I-like SAM-binding methyltransferase superfamily. EFM4 family.

It localises to the cytoplasm. Its subcellular location is the nucleus. It catalyses the reaction L-lysyl-[protein] + 3 S-adenosyl-L-methionine = N(6),N(6),N(6)-trimethyl-L-lysyl-[protein] + 3 S-adenosyl-L-homocysteine + 3 H(+). Functionally, protein-lysine methyltransferase that selectively catalyzes the trimethylation of EEF1A at 'Lys-318'. In Danio rerio (Zebrafish), this protein is EEF1A lysine methyltransferase 2.